We begin with the raw amino-acid sequence, 1072 residues long: DNA-directed RNA polymerase subunit beta (1072 aa).

It belongs to the RNA polymerase beta chain family. As to quaternary structure, in plastids the minimal PEP RNA polymerase catalytic core is composed of four subunits: alpha, beta, beta', and beta''. When a (nuclear-encoded) sigma factor is associated with the core the holoenzyme is formed, which can initiate transcription.

The protein resides in the plastid. It is found in the chloroplast. The enzyme catalyses RNA(n) + a ribonucleoside 5'-triphosphate = RNA(n+1) + diphosphate. DNA-dependent RNA polymerase catalyzes the transcription of DNA into RNA using the four ribonucleoside triphosphates as substrates. This Arabis hirsuta (Hairy rock-cress) protein is DNA-directed RNA polymerase subunit beta.